Consider the following 602-residue polypeptide: Bifunctional lycopene cyclase/phytoene synthase (602 aa).

Residues Met-1 to Arg-238 form a lycopene beta-cyclase region. A run of 7 helical transmembrane segments spans residues Val-7 to Phe-27, Tyr-35 to Tyr-55, Val-69 to Val-89, Pro-110 to Ala-130, Pro-142 to Gly-162, Ala-173 to Ile-193, and Leu-211 to Phe-231. The interval Ile-245 to Ile-602 is phytoene synthase.

This sequence in the N-terminal section; belongs to the lycopene beta-cyclase family. The protein in the C-terminal section; belongs to the phytoene/squalene synthase family.

The protein localises to the membrane. It catalyses the reaction all-trans-lycopene = gamma-carotene. It carries out the reaction gamma-carotene = all-trans-beta-carotene. The enzyme catalyses 2 (2E,6E,10E)-geranylgeranyl diphosphate = 15-cis-phytoene + 2 diphosphate. Its pathway is carotenoid biosynthesis; beta-carotene biosynthesis. The protein operates within carotenoid biosynthesis; phytoene biosynthesis; all-trans-phytoene from geranylgeranyl diphosphate: step 1/1. Its function is as follows. Bifunctional enzyme that catalyzes the reactions from geranylgeranyl diphosphate to phytoene (phytoene synthase) and lycopene to beta-carotene via the intermediate gamma-carotene (lycopene cyclase). The sequence is that of Bifunctional lycopene cyclase/phytoene synthase from Phycomyces blakesleeanus (strain ATCC 8743b / DSM 1359 / FGSC 10004 / NBRC 33097 / NRRL 1555).